An 895-amino-acid polypeptide reads, in one-letter code: Procollagen lysyl hydroxylase and glycosyltransferase (895 aa).

The tract at residues 1–194 (MISRTYVINL…PSDEFIPIMH (194 aa)) is lysyl hydroxylase region. Positions 537–895 (YYFYISGDCI…KRYILVSFVN (359 aa)) are glucosyl transferase region. One can recognise a Fe2OG dioxygenase domain in the interval 805 to 895 (DINLAFVVKY…KRYILVSFVN (91 aa)). Residues H825, D827, and H877 each contribute to the Fe cation site. Residue R887 is part of the active site.

It depends on Fe cation as a cofactor. L-ascorbate serves as cofactor.

It carries out the reaction L-lysyl-[collagen] + 2-oxoglutarate + O2 = (5R)-5-hydroxy-L-lysyl-[collagen] + succinate + CO2. Functionally, displays two enzymatic activities involved in procollagen processing. Forms hydroxylysine residues in -Xaa-Lys-Gly- sequences in collagens. These hydroxylysines are subsequentially glucosylated by a glucosyltransferase activity. Collagen post-translationally modified is detected in mimivirus virion. This chain is Procollagen lysyl hydroxylase and glycosyltransferase, found in Acanthamoeba polyphaga (Amoeba).